A 129-amino-acid chain; its full sequence is DNA-directed RNA polymerase subunit omega (129 aa).

The disordered stretch occupies residues 77-98 (VDEPESEVVPALSSAPQNPEAI).

Belongs to the RNA polymerase subunit omega family. The RNAP catalytic core consists of 2 alpha, 1 beta, 1 beta' and 1 omega subunit. When a sigma factor is associated with the core the holoenzyme is formed, which can initiate transcription.

The catalysed reaction is RNA(n) + a ribonucleoside 5'-triphosphate = RNA(n+1) + diphosphate. Functionally, promotes RNA polymerase assembly. Latches the N- and C-terminal regions of the beta' subunit thereby facilitating its interaction with the beta and alpha subunits. This chain is DNA-directed RNA polymerase subunit omega, found in Methylocella silvestris (strain DSM 15510 / CIP 108128 / LMG 27833 / NCIMB 13906 / BL2).